The chain runs to 429 residues: Alpha-galactosidase A (429 aa).

The first 31 residues, 1-31 (MQLRNPELHLGCALALRFLALVSWDIPGARA), serve as a signal peptide directing secretion. 2 cysteine pairs are disulfide-bonded: C52/C94 and C56/C63. The N-linked (GlcNAc...) asparagine glycan is linked to N139. C142 and C172 are disulfide-bonded. Catalysis depends on D170, which acts as the Nucleophile. N192 carries N-linked (GlcNAc...) asparagine glycosylation. A disulfide bridge links C202 with C223. 203 to 207 (EWPLY) provides a ligand contact to substrate. An N-linked (GlcNAc...) asparagine glycan is attached at N215. D231 serves as the catalytic Proton donor. An intrachain disulfide couples C378 to C382.

It belongs to the glycosyl hydrolase 27 family. In terms of assembly, homodimer.

It is found in the lysosome. It carries out the reaction Hydrolysis of terminal, non-reducing alpha-D-galactose residues in alpha-D-galactosides, including galactose oligosaccharides, galactomannans and galactolipids.. It catalyses the reaction a globoside Gb3Cer (d18:1(4E)) + H2O = a beta-D-Gal-(1-&gt;4)-beta-D-Glc-(1&lt;-&gt;1)-Cer(d18:1(4E)) + D-galactose. The enzyme catalyses a globoside Gb3Cer + H2O = a beta-D-galactosyl-(1-&gt;4)-beta-D-glucosyl-(1&lt;-&gt;1)-ceramide + D-galactose. With respect to regulation, galactosylgalactosylglucosylceramidase activity is stimulated by saposin B and ammonium chloride. Its function is as follows. Catalyzes the hydrolysis of glycosphingolipids and participates in their degradation in the lysosome. In Homo sapiens (Human), this protein is Alpha-galactosidase A.